Reading from the N-terminus, the 311-residue chain is 1D-myo-inositol 2-acetamido-2-deoxy-alpha-D-glucopyranoside deacetylase (311 aa).

Residues histidine 29, aspartate 32, and histidine 162 each coordinate Zn(2+).

It belongs to the MshB deacetylase family. The cofactor is Zn(2+).

The enzyme catalyses 1D-myo-inositol 2-acetamido-2-deoxy-alpha-D-glucopyranoside + H2O = 1D-myo-inositol 2-amino-2-deoxy-alpha-D-glucopyranoside + acetate. Catalyzes the deacetylation of 1D-myo-inositol 2-acetamido-2-deoxy-alpha-D-glucopyranoside (GlcNAc-Ins) in the mycothiol biosynthesis pathway. The protein is 1D-myo-inositol 2-acetamido-2-deoxy-alpha-D-glucopyranoside deacetylase of Corynebacterium efficiens (strain DSM 44549 / YS-314 / AJ 12310 / JCM 11189 / NBRC 100395).